Consider the following 210-residue polypeptide: Probable GTP-binding protein EngB (210 aa).

An EngB-type G domain is found at 25–199; that stretch reads CGIEVAFAGR…RQKLDSWFSE (175 aa). GTP is bound by residues 33–40, 60–64, 78–81, 145–148, and 178–180; these read GRSNAGKS, GRTQL, DLPG, TKAD, and FSS. Positions 40 and 62 each coordinate Mg(2+).

This sequence belongs to the TRAFAC class TrmE-Era-EngA-EngB-Septin-like GTPase superfamily. EngB GTPase family. Requires Mg(2+) as cofactor.

Functionally, necessary for normal cell division and for the maintenance of normal septation. In Salmonella paratyphi C (strain RKS4594), this protein is Probable GTP-binding protein EngB.